Consider the following 107-residue polypeptide: Universal stress protein B homolog (107 aa).

2 consecutive transmembrane segments (helical) span residues Ile6–Leu26 and Val86–Leu106.

Belongs to the universal stress protein B family.

The protein resides in the cell inner membrane. This chain is Universal stress protein B homolog, found in Vibrio vulnificus (strain CMCP6).